Consider the following 246-residue polypeptide: MPLYQDEGVVLRTAKLGEADRILTLLTRDHGKVRAVAKGVRRTKSRFGGRLEPFMRVALLIAEGRSLDVVSQAESIAAYAGPICADFQAYTAANVICETADKLVATEKEPAVAQYRLVLGALNALAKHAHEPSTIGDSYVLRALAIAGWTPRLRVCVVCGEPISSALSWYFSIPAGGLMCAADHTPESEAVSWDAICRLSALVDGDWGELDGVPASASIQRETHQIVEEWGEYYLERPIRSMRLLD.

This sequence belongs to the RecO family.

Functionally, involved in DNA repair and RecF pathway recombination. This is DNA repair protein RecO from Bifidobacterium adolescentis (strain ATCC 15703 / DSM 20083 / NCTC 11814 / E194a).